We begin with the raw amino-acid sequence, 746 residues long: MGQTGKKSEKGPVCWRKRVKSEYMRLRQLKRFRRADEVKTMFSSNRQKILERTETLNQEWKQRRIQPVHIMTSVSSLRGTRECSVTSDLDFPAQVIPLKTLNAVASVPIMYSWSPLQQNFMVEDETVLHNIPYMGDEVLDQDGTFIEELIKNYDGKVHGDRECGFINDEIFVELVNALGQYNDDDDDDDGDDPDEREEKQKDLEDNRDDKETCPPRKFPADKIFEAISSMFPDKGTAEELKEKYKELTEQQLPGALPPECTPNIDGPNAKSVQREQSLHSFHTLFCRRCFKYDCFLHPFHATPNTYKRKNTETALDNKPCGPQCYQHLEGAKEFAAALTAERIKTPPKRPGGRRRGRLPNNSSRPSTPTISVLESKDTDSDREAGTETGGENNDKEEEEKKDETSSSSEANSRCQTPIKMKPNIEPPENVEWSGAEASMFRVLIGTYYDNFCAIARLIGTKTCRQVYEFRVKESSIIAPVPTEDVDTPPRKKKRKHRLWAAHCRKIQLKKDGSSNHVYNYQPCDHPRQPCDSSCPCVIAQNFCEKFCQCSSECQNRFPGCRCKAQCNTKQCPCYLAVRECDPDLCLTCGAADHWDSKNVSCKNCSIQRGSKKHLLLAPSDVAGWGIFIKDPVQKNEFISEYCGEIISQDEADRRGKVYDKYMCSFLFNLNNDFVVDATRKGNKIRFANHSVNPNCYAKVMMVNGDHRIGIFAKRAIQTGEELFFDYRYSQADALKYVGIEREMEIP.

The interval Met-1–Ala-340 is interaction with DNMT1, DNMT3A and DNMT3B. At Ser-21 the chain carries Phosphoserine; by PKB/AKT1. The tract at residues Lys-39–Val-68 is interaction with EED. An O-linked (GlcNAc) serine glycan is attached at Ser-75. The residue at position 76 (Ser-76) is a Phosphoserine. A disordered region spans residues Gln-180–Lys-217. Acidic residues predominate over residues Asn-182 to Glu-195. The span at Arg-196–Lys-217 shows a compositional bias: basic and acidic residues. Positions Glu-329–Pro-522 are interaction with CDYL. At Thr-339 the chain carries Phosphothreonine. The disordered stretch occupies residues Ala-340–Pro-426. Thr-345 is subject to Phosphothreonine; by CDK1 and CDK2. Residues Thr-345 to Arg-357 show a composition bias toward basic residues. Ser-363 and Ser-366 each carry phosphoserine. Thr-367 is subject to Phosphothreonine. A compositionally biased stretch (basic and acidic residues) spans Glu-374–Gly-385. Thr-487 is subject to Phosphothreonine. Positions Cys-503–Ser-605 constitute a CXC domain. The 116-residue stretch at Lys-612–Arg-727 folds into the SET domain. Lys-634 is covalently cross-linked (Glycyl lysine isopeptide (Lys-Gly) (interchain with G-Cter in SUMO2)).

This sequence belongs to the class V-like SAM-binding methyltransferase superfamily. Histone-lysine methyltransferase family. EZ subfamily. As to quaternary structure, component of the PRC2/EED-EZH2 complex, which includes EED, EZH2, SUZ12, RBBP4 and RBBP7 and possibly AEBP2. The minimum components required for methyltransferase activity of the PRC2/EED-EZH2 complex are EED, EZH2 and SUZ12. The PRC2 complex may also interact with DNMT1, DNMT3A, DNMT3B and PHF1 via the EZH2 subunit and with SIRT1 via the SUZ12 subunit. Interacts with HDAC1 and HDAC2. Binds ATRX via the SET domain. Interacts with PRAME. Interacts with CDYL. Interacts with EED. Interacts with BMAL1. Interacts with CLOCK and CRY1. Interacts with DNMT3L; the interaction is direct. Interacts with EZHIP; the interaction blocks EZH2 methyltransferase activity. Interacts with ZNF263; recruited to the SIX3 promoter along with other proteins involved in chromatin modification and transcriptional corepression where it contributes to transcriptional repression. Interacts with ARMC12. Interacts with ZMYND8; the interaction is dependent on the presence of chromatin. Interacts with DDX18; this interaction inhibits the PRC2 complex. Post-translationally, phosphorylated by AKT1. Phosphorylation by AKT1 reduces methyltransferase activity. Phosphorylation at Thr-345 by CDK1 and CDK2 promotes maintenance of H3K27me3 levels at EZH2-target loci, thus leading to epigenetic gene silencing. Sumoylated. In terms of processing, glycosylated: O-GlcNAcylation at Ser-75 by OGT increases stability of EZH2 and facilitates the formation of H3K27me3 by the PRC2/EED-EZH2 complex. As to expression, present in actively dividing cells. Widely expressed in early embryos. In later embryogenesis, expression restricted to central and peripheral nervous system, liver and thymus. In adult, highest expression in spleen, testis and placenta. Lower levels in intestine, muscle and ovary and very low levels in brain and liver. No expression in heart, thyroid gland, lung and kidney.

It localises to the nucleus. It is found in the chromosome. It catalyses the reaction L-lysyl(27)-[histone H3] + 3 S-adenosyl-L-methionine = N(6),N(6),N(6)-trimethyl-L-lysyl(27)-[histone H3] + 3 S-adenosyl-L-homocysteine + 3 H(+). Polycomb group (PcG) protein. Catalytic subunit of the PRC2/EED-EZH2 complex, which methylates (H3K9me) and 'Lys-27' (H3K27me) of histone H3, leading to transcriptional repression of the affected target gene. Able to mono-, di- and trimethylate 'Lys-27' of histone H3 to form H3K27me1, H3K27me2 and H3K27me3, respectively. Displays a preference for substrates with less methylation, loses activity when progressively more methyl groups are incorporated into H3K27, H3K27me0 &gt; H3K27me1 &gt; H3K27me2. Compared to EZH1-containing complexes, it is more abundant in embryonic stem cells and plays a major role in forming H3K27me3, which is required for embryonic stem cell identity and proper differentiation. The PRC2/EED-EZH2 complex may also serve as a recruiting platform for DNA methyltransferases, thereby linking two epigenetic repression systems. Genes repressed by the PRC2/EED-EZH2 complex include HOXA7, HOXB6 and HOXC8. EZH2 can also methylate non-histone proteins such as the transcription factor GATA4 and the nuclear receptor RORA. Regulates the circadian clock via histone methylation at the promoter of the circadian genes. Essential for the CRY1/2-mediated repression of the transcriptional activation of PER1/2 by the CLOCK-BMAL1 heterodimer; involved in the di and trimethylation of 'Lys-27' of histone H3 on PER1/2 promoters which is necessary for the CRY1/2 proteins to inhibit transcription. The protein is Histone-lysine N-methyltransferase EZH2 of Mus musculus (Mouse).